We begin with the raw amino-acid sequence, 234 residues long: Ubiquitin thioesterase OTUB2 (234 aa).

The 192-residue stretch at 40–231 (TAIRKTKGDG…TSHYNILYAA (192 aa)) folds into the OTU domain. Asp48 is an active-site residue. The active-site Nucleophile is the Cys51. His224 is a catalytic residue.

The protein belongs to the peptidase C65 family. Widely expressed. Expressed at higher level in brain.

The enzyme catalyses Thiol-dependent hydrolysis of ester, thioester, amide, peptide and isopeptide bonds formed by the C-terminal Gly of ubiquitin (a 76-residue protein attached to proteins as an intracellular targeting signal).. In terms of biological role, hydrolase that can remove conjugated ubiquitin from proteins in vitro and may therefore play an important regulatory role at the level of protein turnover by preventing degradation. Mediates deubiquitination of 'Lys-11'-,'Lys-48'- and 'Lys-63'-linked polyubiquitin chains, with a preference for 'Lys-63'-linked polyubiquitin chains. The polypeptide is Ubiquitin thioesterase OTUB2 (OTUB2) (Homo sapiens (Human)).